Consider the following 318-residue polypeptide: Phosphoenolpyruvate transferase (318 aa).

7,8-didemethyl-8-hydroxy-5-deazariboflavin is bound at residue aspartate 50.

It belongs to the CofD family. As to quaternary structure, homodimer. Mg(2+) is required as a cofactor.

The enzyme catalyses enolpyruvoyl-2-diphospho-5'-guanosine + 7,8-didemethyl-8-hydroxy-5-deazariboflavin = dehydro coenzyme F420-0 + GMP + H(+). It participates in cofactor biosynthesis; coenzyme F420 biosynthesis. Catalyzes the transfer of the phosphoenolpyruvate moiety from enoylpyruvoyl-2-diphospho-5'-guanosine (EPPG) to 7,8-didemethyl-8-hydroxy-5-deazariboflavin (FO) with the formation of dehydro coenzyme F420-0 and GMP. The protein is Phosphoenolpyruvate transferase of Streptomyces griseus subsp. griseus (strain JCM 4626 / CBS 651.72 / NBRC 13350 / KCC S-0626 / ISP 5235).